The sequence spans 160 residues: Twist-related protein 2 (160 aa).

The segment at Met-1–Glu-63 is disordered. Over residues Lys-27–Lys-37 the composition is skewed to basic residues. Residues Ser-66–Leu-117 form the bHLH domain.

As to quaternary structure, efficient DNA binding requires dimerization with another bHLH protein. Forms a heterodimer with TCF3/E12. Also interacts with MEF2C. In the embryo, highly expressed in chondrogenic cells. In embryonic skin, expressed in the undifferentiated mesenchymal layer beneath the epidermis which later develops into the dermis. Expressed in early myeloid cells but not in lymphoid cells in the liver. Expression also detected in the secretory ependymal epithelium of the choroid plexus primordium. In the adult, expressed in secreting glandular tissues and tubules.

It is found in the nucleus. It localises to the cytoplasm. Its function is as follows. Binds to the E-box consensus sequence 5'-CANNTG-3' as a heterodimer and inhibits transcriptional activation by MYOD1, MYOG, MEF2A and MEF2C. Also represses expression of pro-inflammatory cytokines such as TNFA and IL1B. Involved in postnatal glycogen storage and energy metabolism. Inhibits the premature or ectopic differentiation of preosteoblast cells during osteogenesis, possibly by changing the internal signal transduction response of osteoblasts to external growth factors. This chain is Twist-related protein 2 (TWIST2), found in Homo sapiens (Human).